The chain runs to 222 residues: MSLQVKDIKKSFGNGQSETPVLKGINFNVNEGEFVILNGASGSGKTTLLTILGGLLSQSSGDILYNNQPLFTRDRKASELRLNEIGFIFQSSHLVPYLKVKAQLTTIGKEAGMTMQEANQRAETLLKQIGLNHRLTAFPHMLSGGEKQRVAIVRALMNHPKIILADEPTASLDAERATEVIEMIKNQIKSKKMIGIMITHDKRLFEYADKVIELDDGVITNA.

The ABC transporter domain occupies 3–222 (LQVKDIKKSF…ELDDGVITNA (220 aa)). 39 to 46 (GASGSGKT) serves as a coordination point for ATP.

Belongs to the ABC transporter superfamily. HrtA family. In terms of assembly, the complex is composed of two ATP-binding proteins (HrtA), two transmembrane proteins (HrtB) and a solute-binding protein.

It localises to the cell membrane. Functionally, part of the ABC transporter complex hrt involved in hemin import. Responsible for energy coupling to the transport system. The chain is Putative hemin import ATP-binding protein HrtA (hrtA) from Staphylococcus saprophyticus subsp. saprophyticus (strain ATCC 15305 / DSM 20229 / NCIMB 8711 / NCTC 7292 / S-41).